Reading from the N-terminus, the 178-residue chain is Large ribosomal subunit protein uL6 (178 aa).

This sequence belongs to the universal ribosomal protein uL6 family. In terms of assembly, part of the 50S ribosomal subunit.

In terms of biological role, this protein binds to the 23S rRNA, and is important in its secondary structure. It is located near the subunit interface in the base of the L7/L12 stalk, and near the tRNA binding site of the peptidyltransferase center. The chain is Large ribosomal subunit protein uL6 from Methanobrevibacter smithii (strain ATCC 35061 / DSM 861 / OCM 144 / PS).